We begin with the raw amino-acid sequence, 658 residues long: MVMEIVKPNTCIRGCCTSESIPLHLPSSSFTLLSPIAKGSESVVYEAILDGRRVAAKKPILSTSDDLDKFHRNLQLSCNLNHPGVAKLLAAHAKPPNYMFFFDFYESGTLAEKLHVEEWSPSIDQVLLITLHLAKALQYLHNNGIVHRDVKPANVLLDEKFFPYLADFGLAEYKKNLREVNLQNWRSSGKPTGGFHKKNMVGTLIYMAPEILRKDMYTEKADIYSFGILINELLTGVVPYTDRRAEAQAHTVLEMNYTEQQLTVAIVSSGLRPALAEIGLHLPKSLLSLIQNCWESDPSKRPSSDNVVLELESIWEQVRGKQQGHLLEKTSNSQSDTDGADIIKNSGDYRDTVNWFSQGECLSKKSSVSTVFDVKLWSSSTDEPSRYVPVISCGSFATCGRRESMEDTHFIIPHMCNEESIHLFAIFDGHRGAAAAEFSAQVLPGLVQSLCSTSAGEALSQAFVRTDLAFRQELDSHRQSKRVSQKDWHPGCTAIASLLVENKLFVANVGDSRAILCRAGHPFALSKAHLATCIDERNRVIGEGGRIEWLVDTWRVAPAGLQVTRSIGDDDLKPAVTAEPEISETILSADDEFLVMASDGLWDVMNDEEVIGIIRDTVKEPSMCSKRLATEAAARGSGDNITVIVVFLRPVSTAERIY.

A Protein kinase domain is found at 30-314 (FTLLSPIAKG…DNVVLELESI (285 aa)). ATP-binding positions include 36 to 44 (IAKGSESVV) and Lys57. The active-site Proton acceptor is the Asp149. Residues 392 to 648 (SCGSFATCGR…DNITVIVVFL (257 aa)) form the PPM-type phosphatase domain. Asp428, Gly429, Asp599, and Asp639 together coordinate Mn(2+).

In the N-terminal section; belongs to the protein kinase superfamily. Ser/Thr protein kinase family. The protein in the C-terminal section; belongs to the PP2C family. It depends on Mg(2+) as a cofactor. The cofactor is Mn(2+).

It carries out the reaction L-seryl-[protein] + ATP = O-phospho-L-seryl-[protein] + ADP + H(+). The catalysed reaction is L-threonyl-[protein] + ATP = O-phospho-L-threonyl-[protein] + ADP + H(+). The enzyme catalyses O-phospho-L-seryl-[protein] + H2O = L-seryl-[protein] + phosphate. It catalyses the reaction O-phospho-L-threonyl-[protein] + H2O = L-threonyl-[protein] + phosphate. In Arabidopsis thaliana (Mouse-ear cress), this protein is Protein kinase and PP2C-like domain-containing protein.